Here is an 833-residue protein sequence, read N- to C-terminus: Phenylalanine--tRNA ligase beta subunit (833 aa).

A tRNA-binding domain is found at 42 to 157 (ADLKGPLAVG…PEYEVGTDAI (116 aa)). Positions 411–485 (SAPHTITIPA…RLEGYENLPS (75 aa)) constitute a B5 domain. Asp463, Asp469, Glu472, and Glu473 together coordinate Mg(2+). Residues 739–832 (STFPVATQDV…AAERTGAALR (94 aa)) enclose the FDX-ACB domain.

Belongs to the phenylalanyl-tRNA synthetase beta subunit family. Type 1 subfamily. Tetramer of two alpha and two beta subunits. Requires Mg(2+) as cofactor.

It is found in the cytoplasm. The catalysed reaction is tRNA(Phe) + L-phenylalanine + ATP = L-phenylalanyl-tRNA(Phe) + AMP + diphosphate + H(+). The sequence is that of Phenylalanine--tRNA ligase beta subunit from Streptomyces avermitilis (strain ATCC 31267 / DSM 46492 / JCM 5070 / NBRC 14893 / NCIMB 12804 / NRRL 8165 / MA-4680).